A 346-amino-acid chain; its full sequence is UDP-N-acetylenolpyruvoylglucosamine reductase (346 aa).

In terms of domain architecture, FAD-binding PCMH-type spans 18–189 (LHAQARAFIA…VSVVFALKTH (172 aa)). Arg-165 is an active-site residue. Ser-240 serves as the catalytic Proton donor. Glu-336 is a catalytic residue.

The protein belongs to the MurB family. FAD serves as cofactor.

It localises to the cytoplasm. The catalysed reaction is UDP-N-acetyl-alpha-D-muramate + NADP(+) = UDP-N-acetyl-3-O-(1-carboxyvinyl)-alpha-D-glucosamine + NADPH + H(+). It participates in cell wall biogenesis; peptidoglycan biosynthesis. Functionally, cell wall formation. In Neisseria gonorrhoeae (strain ATCC 700825 / FA 1090), this protein is UDP-N-acetylenolpyruvoylglucosamine reductase.